The primary structure comprises 174 residues: Inactive signal peptidase IA (174 aa).

The Cytoplasmic portion of the chain corresponds to 1 to 7 (MKKVVKY). Residues 8-28 (LISLILAIIIVLFVQTFVIVG) form a helical membrane-spanning segment. Residues 29–174 (HVIPNNDMSP…FSKWTVQFKS (146 aa)) lie on the Extracellular side of the membrane.

It belongs to the peptidase S26 family.

It localises to the cell membrane. Functionally, catalytically inactive. The sequence is that of Inactive signal peptidase IA (spsA) from Staphylococcus aureus (strain COL).